Here is a 311-residue protein sequence, read N- to C-terminus: Putative dihydroorotate dehydrogenase A (fumarate) (311 aa).

Residues K45, 69–73 (NSMGL), and N128 each bind substrate. Residue 45–46 (KT) participates in FMN binding. An FMN-binding site is contributed by N128. C131 functions as the Nucleophile in the catalytic mechanism. Residues K165 and V193 each contribute to the FMN site. 194–195 (NS) is a substrate binding site. FMN-binding positions include G220, 248–249 (GG), and 270–271 (GT).

It belongs to the dihydroorotate dehydrogenase family. Type 1 subfamily. In terms of assembly, homodimer. FMN is required as a cofactor.

Its subcellular location is the cytoplasm. It catalyses the reaction (S)-dihydroorotate + fumarate = orotate + succinate. It participates in pyrimidine metabolism; UMP biosynthesis via de novo pathway. Catalyzes the conversion of dihydroorotate to orotate with fumarate as the electron acceptor. This is Putative dihydroorotate dehydrogenase A (fumarate) (pyrD) from Streptococcus pyogenes serotype M5 (strain Manfredo).